Consider the following 350-residue polypeptide: Ion-translocating oxidoreductase complex subunit D (350 aa).

The next 3 helical transmembrane spans lie at Ile-20–Phe-39, Ile-89–Ala-109, and Pro-123–Leu-143. Position 187 is an FMN phosphoryl threonine (Thr-187). 5 consecutive transmembrane segments (helical) span residues Leu-215–Leu-235, Ile-244–Pro-264, Phe-267–Leu-287, Leu-301–Pro-321, and Asp-322–Thr-342.

Belongs to the NqrB/RnfD family. The complex is composed of six subunits: RnfA, RnfB, RnfC, RnfD, RnfE and RnfG. FMN serves as cofactor.

The protein localises to the cell inner membrane. In terms of biological role, part of a membrane-bound complex that couples electron transfer with translocation of ions across the membrane. The sequence is that of Ion-translocating oxidoreductase complex subunit D from Cronobacter sakazakii (strain ATCC BAA-894) (Enterobacter sakazakii).